Reading from the N-terminus, the 36-residue chain is Cytochrome b6-f complex subunit 5 (36 aa).

A helical transmembrane segment spans residues 5 to 25 (LLAGIVLGLVPVTLAGLFVAA).

This sequence belongs to the PetG family. In terms of assembly, the 4 large subunits of the cytochrome b6-f complex are cytochrome b6, subunit IV (17 kDa polypeptide, PetD), cytochrome f and the Rieske protein, while the 4 small subunits are PetG, PetL, PetM and PetN. The complex functions as a dimer.

The protein resides in the cellular thylakoid membrane. Functionally, component of the cytochrome b6-f complex, which mediates electron transfer between photosystem II (PSII) and photosystem I (PSI), cyclic electron flow around PSI, and state transitions. PetG is required for either the stability or assembly of the cytochrome b6-f complex. This is Cytochrome b6-f complex subunit 5 from Acaryochloris marina (strain MBIC 11017).